The primary structure comprises 271 residues: Thiazole synthase (271 aa).

Residue Lys95 is the Schiff-base intermediate with DXP of the active site. 1-deoxy-D-xylulose 5-phosphate contacts are provided by residues Gly156, 182 to 183 (AG), and 204 to 205 (NT).

It belongs to the ThiG family. Homotetramer. Forms heterodimers with either ThiH or ThiS.

It is found in the cytoplasm. It catalyses the reaction [ThiS sulfur-carrier protein]-C-terminal-Gly-aminoethanethioate + 2-iminoacetate + 1-deoxy-D-xylulose 5-phosphate = [ThiS sulfur-carrier protein]-C-terminal Gly-Gly + 2-[(2R,5Z)-2-carboxy-4-methylthiazol-5(2H)-ylidene]ethyl phosphate + 2 H2O + H(+). The protein operates within cofactor biosynthesis; thiamine diphosphate biosynthesis. Catalyzes the rearrangement of 1-deoxy-D-xylulose 5-phosphate (DXP) to produce the thiazole phosphate moiety of thiamine. Sulfur is provided by the thiocarboxylate moiety of the carrier protein ThiS. In vitro, sulfur can be provided by H(2)S. The polypeptide is Thiazole synthase (Shewanella amazonensis (strain ATCC BAA-1098 / SB2B)).